Reading from the N-terminus, the 557-residue chain is MSNPRHNEREVRSPRGDELNAKSWLTEAPLRMLMNNLDPDVAERPHELVVYGGIGRAARTWDDFDRIVATLKTLNDDETLLVQSGKPVGVFRTHKDAPRVLIANSNLVPHWANWDHFNELDKKGLAMYGQMTAGSWIYIGAQGIVQGTYETFVEAGRQHYGGNLKGRWILTGGLGGMGGAQPLAAVMAGACCLAVECDETRADFRLRTRYVDEKTHSLDEALAKIDAWTKAGEAKSIALIGNAAEIFPELVKRGVKPDIVTDQTSAHDPVHGYLPLGWTVAEWRAKQENDPKVVEKAARASMKVQVQAMLDFWNAGIPTVDYGNNIRQMALEEGLENAFAFPGFVPAYIRPLFCRGIGPFRWAALSGDPEDIAKTDAKVKELLPDNKHLHNWLDMAKERIAFQGLPARICWVGLGDRHRLGLAFNEMVRNGELKAPIVIGRDHLDSGSVASPNRETEAMKDGSDAVSDWPLLNALLNTASGATWVSLHHGGGVGMGFSQHAGMVICCDGTEDADRRLERVLWNDPATGVMRHADAGYDIALDWARKQGLRLPAILGN.

A disordered region spans residues 1 to 20 (MSNPRHNEREVRSPRGDELN). NAD(+) is bound by residues 52–53 (GG), glutamine 130, 176–178 (GMG), glutamate 196, arginine 201, 242–243 (NA), 263–267 (QTSAH), 273–274 (YL), and tyrosine 322. Cysteine 410 is an active-site residue. Residue glycine 492 coordinates NAD(+).

This sequence belongs to the urocanase family. NAD(+) serves as cofactor.

It is found in the cytoplasm. The enzyme catalyses 4-imidazolone-5-propanoate = trans-urocanate + H2O. It participates in amino-acid degradation; L-histidine degradation into L-glutamate; N-formimidoyl-L-glutamate from L-histidine: step 2/3. Its function is as follows. Catalyzes the conversion of urocanate to 4-imidazolone-5-propionate. The sequence is that of Urocanate hydratase from Brucella melitensis biotype 1 (strain ATCC 23456 / CCUG 17765 / NCTC 10094 / 16M).